The chain runs to 913 residues: Zinc finger protein 112 (913 aa).

The KRAB domain occupies valine 8–serine 79. Residue lysine 256 forms a Glycyl lysine isopeptide (Lys-Gly) (interchain with G-Cter in SUMO2) linkage. A C2H2-type 1; degenerate zinc finger spans residues tyrosine 258–histidine 280. The segment at tyrosine 443–histidine 465 adopts a C2H2-type 2; degenerate zinc-finger fold. Residues tyrosine 471–histidine 493 form a C2H2-type 3; degenerate zinc finger. The C2H2-type 4; degenerate zinc-finger motif lies at lysine 497 to histidine 519. 13 C2H2-type zinc fingers span residues tyrosine 525–histidine 547, tyrosine 553–histidine 575, tyrosine 581–histidine 603, tyrosine 609–histidine 631, phenylalanine 637–histidine 659, tyrosine 665–histidine 687, tyrosine 693–histidine 715, tyrosine 721–histidine 743, tyrosine 749–histidine 771, tyrosine 777–histidine 799, tyrosine 805–histidine 827, tyrosine 833–histidine 855, and tyrosine 861–histidine 883. Lysine 890 is covalently cross-linked (Glycyl lysine isopeptide (Lys-Gly) (interchain with G-Cter in SUMO2)).

Belongs to the krueppel C2H2-type zinc-finger protein family.

It localises to the nucleus. Its function is as follows. May be involved in transcriptional regulation. This chain is Zinc finger protein 112 (ZNF112), found in Homo sapiens (Human).